The chain runs to 439 residues: Glutamine synthetase (439 aa).

The 82-residue stretch at 12–93 folds into the GS beta-grasp domain; that stretch reads SKIKFVQLVF…VYGFIYKDNK (82 aa). A GS catalytic domain is found at 99–439; the sequence is PRGILKRALE…EWELERYFFL (341 aa). Mg(2+) is bound by residues glutamate 122 and glutamate 124. Residue glutamate 172 participates in ATP binding. Positions 177 and 184 each coordinate Mg(2+). Position 229 (glycine 229) interacts with L-glutamate. Histidine 233 contributes to the Mg(2+) binding site. Residues 235–237 and serine 237 contribute to the ATP site; that span reads HIS. Arginine 283, glutamate 289, and arginine 301 together coordinate L-glutamate. Residues arginine 301, arginine 306, and lysine 313 each coordinate ATP. Glutamate 318 is a Mg(2+) binding site. Residue arginine 320 coordinates L-glutamate.

Belongs to the glutamine synthetase family. As to quaternary structure, oligomer of 12 subunits arranged in the form of two hexagons. Requires Mg(2+) as cofactor.

The protein resides in the cytoplasm. The catalysed reaction is L-glutamate + NH4(+) + ATP = L-glutamine + ADP + phosphate + H(+). Probably involved in nitrogen metabolism via ammonium assimilation. Catalyzes the ATP-dependent biosynthesis of glutamine from glutamate and ammonia. The polypeptide is Glutamine synthetase (Pyrococcus furiosus (strain ATCC 43587 / DSM 3638 / JCM 8422 / Vc1)).